The sequence spans 240 residues: Uridylate kinase (240 aa).

12-15 (KLSG) serves as a coordination point for ATP. The segment at 20–25 (GKQGFG) is involved in allosteric activation by GTP. Glycine 54 contacts UMP. ATP contacts are provided by glycine 55 and arginine 59. UMP contacts are provided by residues aspartate 74 and 135-142 (TGNPYFST). 3 residues coordinate ATP: asparagine 163, tyrosine 169, and aspartate 172.

Belongs to the UMP kinase family. In terms of assembly, homohexamer.

Its subcellular location is the cytoplasm. The catalysed reaction is UMP + ATP = UDP + ADP. It functions in the pathway pyrimidine metabolism; CTP biosynthesis via de novo pathway; UDP from UMP (UMPK route): step 1/1. Allosterically activated by GTP. Inhibited by UTP. Functionally, catalyzes the reversible phosphorylation of UMP to UDP. The chain is Uridylate kinase from Geobacillus thermodenitrificans (strain NG80-2).